The following is an 882-amino-acid chain: Serine/threonine-protein kinase greatwall (882 aa).

The residue at position 1 (M1) is an N-acetylmethionine. Residues 35–838 (FTIVKPISRG…MKELKRHHLF (804 aa)) enclose the Protein kinase domain. Residues 41–49 (ISRGAFGKV) and K62 each bind ATP. The Proton acceptor role is filled by D156. Phosphothreonine is present on residues T207 and T222. Phosphoserine occurs at positions 293, 371, and 454. Phosphothreonine is present on T521. Phosphoserine occurs at positions 554, 558, 633, 660, and 671. Positions 713–736 (TPNQVKSGTPYRTPKSVRRGAAPV) are disordered. T725 bears the Phosphothreonine mark. A Phosphoserine modification is found at S728. T744 is modified (phosphothreonine; by CDK1). Residues 839–882 (SDVDWENLQHQTMPFIPQPDDETDTSYFEARNNAQHLTISGFSL) enclose the AGC-kinase C-terminal domain. Residues S878 and S881 each carry the phosphoserine modification.

Belongs to the protein kinase superfamily. AGC Ser/Thr protein kinase family. Phosphorylation at Thr-744 by CDK1 during M phase activates its kinase activity. Maximum phosphorylation occurs in prometaphase.

It localises to the cytoplasm. Its subcellular location is the cytoskeleton. It is found in the microtubule organizing center. The protein resides in the centrosome. The protein localises to the nucleus. The catalysed reaction is L-seryl-[protein] + ATP = O-phospho-L-seryl-[protein] + ADP + H(+). The enzyme catalyses L-threonyl-[protein] + ATP = O-phospho-L-threonyl-[protein] + ADP + H(+). Its function is as follows. Serine/threonine kinase that plays a key role in M phase by acting as a regulator of mitosis entry and maintenance. Acts by promoting the inactivation of protein phosphatase 2A (PP2A) during M phase: does not directly inhibit PP2A but acts by mediating phosphorylation and subsequent activation of ARPP19 and ENSA at 'Ser-62' and 'Ser-67', respectively. ARPP19 and ENSA are phosphatase inhibitors that specifically inhibit the PPP2R2D (PR55-delta) subunit of PP2A. Inactivation of PP2A during M phase is essential to keep cyclin-B1-CDK1 activity high. Following DNA damage, it is also involved in checkpoint recovery by being inhibited. This is Serine/threonine-protein kinase greatwall (MASTL) from Ailuropoda melanoleuca (Giant panda).